Consider the following 98-residue polypeptide: ESAT-6-like protein EsxM (98 aa).

Belongs to the WXG100 family. CFP-10 subfamily.

Its subcellular location is the secreted. Alters the host macrophage cytoskeleton and enhances macrophage motility. Promotes granuloma efflux, extrapulmonary dissemination of infection and bone disease. This chain is ESAT-6-like protein EsxM, found in Mycobacterium marinum (strain ATCC BAA-535 / M).